The sequence spans 732 residues: Segment polarity protein dishevelled homolog DVL-2 (732 aa).

The DIX domain occupies 1 to 82; that stretch reads MAETKVIYHL…RVVSWLVSSE (82 aa). Disordered stretches follow at residues 81–181 and 195–237; these read SETS…SSST and EEDD…SSFS. Pro residues predominate over residues 98–111; that stretch reads DPPPVPPPVPPPPA. Over residues 146–157 the composition is skewed to basic and acidic residues; it reads MRRDRVRRRDST. The span at 202–213 shows a compositional bias: polar residues; it reads RFSSSTEQSSAS. Positions 215–227 are enriched in basic residues; sequence LLKRHRRRRKQRP. Positions 250-335 constitute a PDZ domain; that stretch reads TVTLNMEKYN…KPGPIILTVA (86 aa). The 75-residue stretch at 424-498 folds into the DEP domain; it reads PESGLEVRDR…SEQCYYIFGD (75 aa). 3 stretches are compositionally biased toward low complexity: residues 570-589, 612-629, and 637-647; these read MGSA…SNRS, KSGS…SIRR, and PPSERSTSSRP. Positions 570-660 are disordered; the sequence is MGSAGSQHSE…HPPSVHSYAA (91 aa).

This sequence belongs to the DSH family. In terms of assembly, can form homomultimers. Interacts with prickle1. Interacts (via the PDZ domain) with ccdc88c/dal and dact1-B/dpr. Interacts (via the DIX domain) with ARP/Axin-related protein and dact1-A/frodo. Interacts with sdc4, possibly via fz7. Interacts directly (via the DEP domain) with efnb1/ephrin-B1. May interact indirectly with the phosphorylated ephrin receptors ephb1 and ephb2 via SH domain-containing adapters. Post-translationally, phosphorylated. Phosphorylation is controlled by frizzled proteins, correlates with the onset of embryo dorsalizing events and is higher in the dorsal half of early cleavage embryos. Phosphorylated on tyrosine residues in response to association with efnb1/ephrin-B1.

The protein localises to the cytoplasm. The protein resides in the cytoplasmic vesicle. It is found in the cell projection. It localises to the cilium. Its subcellular location is the nucleus. The protein localises to the cell membrane. Functionally, involved in at least 2 independent signaling cascades, controlling cell fate via canonical Wnt signaling and cell polarity via a planar cell polarity (PCP) cascade. Acts synergistically with dal/dapple-like to activate Wnt signaling, stabilizing ctnnb1/beta-catenin and leading to dorsal axis formation. Also prevents degradation of ctnnb1/beta-catenin by displacing gsk3 from a complex with ARP/Axin-related protein. Has an additional role in anterior-posterior (A/P) axis formation, specifying different neuroectodermal cell fates along the A/P axis in a dose-dependent manner by activating several early patterning genes. In the PCP pathway, required at the cell membrane for PCP-mediated neural and mesodermal convergent extension during gastrulation and subsequent neural tube closure, acting to activate jnk. Also involved in blastopore closure and archenteron elongation during early, but not late, gastrulation. Associates with ephrin receptors and ligands and acts as part of a downstream PCP pathway to mediate ephrin-mediated cell repulsion via activation of rhoa. Required for efnb1/ephrin-B1-driven movement of non-retinal progenitor cells into the retina during eye field formation. Patterns the hindbrain. Required for ciliogenesis. Controls the docking of basal bodies to the apical plasma membrane; mediates the activation, but not localization of rhoa at the apical surface of ciliated cells during basal body docking. Furthermore, required for the association of basal bodies with membrane-bound vesicles and the vesicle-trafficking protein exoc4/sec8, and this association is in turn required for basal body docking. Once basal bodies are docked, required for the planar polarization of basal bodies that underlies ciliary beating and the directional fluid flow across ciliated epithelia. This Xenopus tropicalis (Western clawed frog) protein is Segment polarity protein dishevelled homolog DVL-2.